Reading from the N-terminus, the 283-residue chain is Nudix hydrolase 6 (283 aa).

Residues 101 to 233 (SHRIGVGAFV…KKELFRFMAN (133 aa)) form the Nudix hydrolase domain. The short motif at 139 to 160 (GVVKEGENIWEGALREVEEETG) is the Nudix box element. A divalent metal cation contacts are provided by Glu154, Glu158, and Glu204.

The protein belongs to the Nudix hydrolase family. Mg(2+) is required as a cofactor. Requires Mn(2+) as cofactor. As to expression, expressed in stems and leaves. Weakly or not expressed in roots.

The catalysed reaction is ADP-D-ribose + H2O = D-ribose 5-phosphate + AMP + 2 H(+). It carries out the reaction NAD(+) + H2O = beta-nicotinamide D-ribonucleotide + AMP + 2 H(+). The enzyme catalyses NADH + H2O = reduced beta-nicotinamide D-ribonucleotide + AMP + 2 H(+). In terms of biological role, probably mediates the hydrolysis of some nucleoside diphosphate derivatives. In vitro, it can use both NADH and ADP-ribose as substrates; however the relevance of such substrates in vivo is unclear. The polypeptide is Nudix hydrolase 6 (Arabidopsis thaliana (Mouse-ear cress)).